The following is a 90-amino-acid chain: Co-chaperonin GroES (90 aa).

It belongs to the GroES chaperonin family. As to quaternary structure, heptamer of 7 subunits arranged in a ring. Interacts with the chaperonin GroEL.

Its subcellular location is the cytoplasm. Its function is as follows. Together with the chaperonin GroEL, plays an essential role in assisting protein folding. The GroEL-GroES system forms a nano-cage that allows encapsulation of the non-native substrate proteins and provides a physical environment optimized to promote and accelerate protein folding. GroES binds to the apical surface of the GroEL ring, thereby capping the opening of the GroEL channel. In Bacteroides thetaiotaomicron (strain ATCC 29148 / DSM 2079 / JCM 5827 / CCUG 10774 / NCTC 10582 / VPI-5482 / E50), this protein is Co-chaperonin GroES.